The sequence spans 190 residues: MEEEGSGCNVPRLPWASILRAALLLLLIGMVIYCFLCGQRFTQQQLDSTGWDLAELLLNHTESRQDPRLRWQGSPALGRSFVHGPELDNGQLRIQRTGIYRLHIQVTLTNCSSSTWTVMPRQATLTLGICSPTTHSISLLRLNFHHTCRVASQRLTPLAKGDVLCTNLTLPLLPSRNADETFFGVQLVRP.

Residues Met-1 to Ser-17 are Cytoplasmic-facing. The helical transmembrane segment at Ile-18–Gly-38 threads the bilayer. The Extracellular portion of the chain corresponds to Gln-39–Pro-190. One can recognise a THD domain in the interval Asp-52–Val-188. N-linked (GlcNAc...) asparagine glycans are attached at residues Asn-59 and Asn-110. Intrachain disulfides connect Cys-111/Cys-148 and Cys-130/Cys-165. Asn-167 carries an N-linked (GlcNAc...) asparagine glycan.

This sequence belongs to the tumor necrosis factor family. Homotrimer. Post-translationally, N-glycosylated.

It localises to the cell membrane. Functionally, expressed at the plasma membrane of B cells, it is the ligand of the CD27 receptor which is specifically expressed at the surface of T cells. The CD70-CD27 signaling pathway mediates antigen-specific T cell activation and expansion which in turn provides immune surveillance of B cells. In Sus scrofa (Pig), this protein is CD70 antigen.